We begin with the raw amino-acid sequence, 255 residues long: Triosephosphate isomerase (255 aa).

Asn9 to Lys11 contacts substrate. The active-site Electrophile is His95. Glu167 acts as the Proton acceptor in catalysis. Substrate-binding positions include Gly173, Ser212, and Gly233 to Gly234.

It belongs to the triosephosphate isomerase family. Homodimer.

The protein localises to the cytoplasm. It carries out the reaction D-glyceraldehyde 3-phosphate = dihydroxyacetone phosphate. It functions in the pathway carbohydrate biosynthesis; gluconeogenesis. It participates in carbohydrate degradation; glycolysis; D-glyceraldehyde 3-phosphate from glycerone phosphate: step 1/1. In terms of biological role, involved in the gluconeogenesis. Catalyzes stereospecifically the conversion of dihydroxyacetone phosphate (DHAP) to D-glyceraldehyde-3-phosphate (G3P). This chain is Triosephosphate isomerase, found in Salmonella agona (strain SL483).